Reading from the N-terminus, the 311-residue chain is Formimidoylglutamase (311 aa).

6 residues coordinate Mn(2+): histidine 122, aspartate 151, histidine 153, aspartate 155, cysteine 242, and aspartate 244.

Belongs to the arginase family. Mn(2+) serves as cofactor.

The catalysed reaction is N-formimidoyl-L-glutamate + H2O = formamide + L-glutamate. It participates in amino-acid degradation; L-histidine degradation into L-glutamate; L-glutamate from N-formimidoyl-L-glutamate (hydrolase route): step 1/1. In terms of biological role, catalyzes the conversion of N-formimidoyl-L-glutamate to L-glutamate and formamide. The sequence is that of Formimidoylglutamase from Pseudomonas paraeruginosa (strain DSM 24068 / PA7) (Pseudomonas aeruginosa (strain PA7)).